A 95-amino-acid chain; its full sequence is Co-chaperonin GroES (95 aa).

The segment at 36–55 (QEGEVVAVGSGKTLDDGSKV) is disordered.

The protein belongs to the GroES chaperonin family. In terms of assembly, heptamer of 7 subunits arranged in a ring. Interacts with the chaperonin GroEL.

The protein resides in the cytoplasm. In terms of biological role, together with the chaperonin GroEL, plays an essential role in assisting protein folding. The GroEL-GroES system forms a nano-cage that allows encapsulation of the non-native substrate proteins and provides a physical environment optimized to promote and accelerate protein folding. GroES binds to the apical surface of the GroEL ring, thereby capping the opening of the GroEL channel. The protein is Co-chaperonin GroES of Natranaerobius thermophilus (strain ATCC BAA-1301 / DSM 18059 / JW/NM-WN-LF).